The chain runs to 182 residues: Protein GrpE (182 aa).

The span at 1–17 shows a compositional bias: basic and acidic residues; sequence MEEKKRCEESEKIKEQE. The disordered stretch occupies residues 1-33; that stretch reads MEEKKRCEESEKIKEQENETLPNEDSPSMGKKV.

The protein belongs to the GrpE family. Homodimer.

It is found in the cytoplasm. Participates actively in the response to hyperosmotic and heat shock by preventing the aggregation of stress-denatured proteins, in association with DnaK and GrpE. It is the nucleotide exchange factor for DnaK and may function as a thermosensor. Unfolded proteins bind initially to DnaJ; upon interaction with the DnaJ-bound protein, DnaK hydrolyzes its bound ATP, resulting in the formation of a stable complex. GrpE releases ADP from DnaK; ATP binding to DnaK triggers the release of the substrate protein, thus completing the reaction cycle. Several rounds of ATP-dependent interactions between DnaJ, DnaK and GrpE are required for fully efficient folding. This Borrelia hermsii (strain HS1 / DAH) protein is Protein GrpE.